We begin with the raw amino-acid sequence, 223 residues long: Pyridoxal phosphate homeostasis protein (223 aa).

Position 36 is an N6-(pyridoxal phosphate)lysine (Lys-36).

The protein belongs to the pyridoxal phosphate-binding protein YggS/PROSC family. In terms of assembly, monomer.

Functionally, pyridoxal 5'-phosphate (PLP)-binding protein, which is involved in PLP homeostasis. In Buchnera aphidicola subsp. Baizongia pistaciae (strain Bp), this protein is Pyridoxal phosphate homeostasis protein.